Reading from the N-terminus, the 312-residue chain is Small ribosomal subunit protein uS2 (312 aa).

The disordered stretch occupies residues 232–312 (RASGAAERDE…AAPEGEAAAE (81 aa)). Basic and acidic residues predominate over residues 245-284 (REGRDDRGDRRDDRRGPRRGDRRDDRRDRGGDRGGDRRGP). Residues 291–312 (AAPVASAEPAAEAAPEGEAAAE) show a composition bias toward low complexity.

Belongs to the universal ribosomal protein uS2 family.

This Myxococcus xanthus (strain DK1622) protein is Small ribosomal subunit protein uS2.